The sequence spans 450 residues: Phosphoglucosamine mutase (450 aa).

The active-site Phosphoserine intermediate is the Ser101. Residues Ser101, Asp240, Asp242, and Asp244 each coordinate Mg(2+). Ser101 is subject to Phosphoserine.

The protein belongs to the phosphohexose mutase family. It depends on Mg(2+) as a cofactor. In terms of processing, activated by phosphorylation.

It carries out the reaction alpha-D-glucosamine 1-phosphate = D-glucosamine 6-phosphate. Its function is as follows. Catalyzes the conversion of glucosamine-6-phosphate to glucosamine-1-phosphate. The chain is Phosphoglucosamine mutase from Streptococcus sanguinis (strain SK36).